Reading from the N-terminus, the 344-residue chain is Phosphate acyltransferase (344 aa).

Belongs to the PlsX family. As to quaternary structure, homodimer. Probably interacts with PlsY.

The protein resides in the cytoplasm. The enzyme catalyses a fatty acyl-[ACP] + phosphate = an acyl phosphate + holo-[ACP]. It participates in lipid metabolism; phospholipid metabolism. In terms of biological role, catalyzes the reversible formation of acyl-phosphate (acyl-PO(4)) from acyl-[acyl-carrier-protein] (acyl-ACP). This enzyme utilizes acyl-ACP as fatty acyl donor, but not acyl-CoA. The sequence is that of Phosphate acyltransferase from Acaryochloris marina (strain MBIC 11017).